A 492-amino-acid chain; its full sequence is Transmembrane protein 104 homolog (492 aa).

Topologically, residues 1–17 are cytoplasmic; the sequence is MQSNTDSSTSGTYSQTV. A helical membrane pass occupies residues 18–38; the sequence is GLLYVFNLIVGTGALALPKAF. Topologically, residues 39–44 are extracellular; it reads QTAGWL. A helical membrane pass occupies residues 45 to 65; sequence LSITLLTFSAFMSYVAATFVI. Residues 66–113 lie on the Cytoplasmic side of the membrane; it reads EALSVANAVLSKKRRVEYDDVVVADGPSTFEISKKVEVSEMASMFLSK. Residues 114-134 traverse the membrane as a helical segment; sequence VSLVFSYFAIIIYLFGDLAIY. The Extracellular portion of the chain corresponds to 135–176; that stretch reads STTVPKSAMNIVCATINASTVKSSDPCHESWPEILTRMTVYR. The N-linked (GlcNAc...) asparagine glycan is linked to N151. The chain crosses the membrane as a helical span at residues 177-197; it reads FFVIIFVVVVCLPMVIAGITK. Residues 198-209 are Cytoplasmic-facing; the sequence is TRHIQIMTTLSR. Residues 210 to 230 form a helical membrane-spanning segment; it reads WAAFILMISLATMQLSSDGAA. Over 231-237 the chain is Extracellular; that stretch reads AHPPAYN. A helical transmembrane segment spans residues 238-258; the sequence is FHGFGSLFGCAVYAFMCHHSI. The Cytoplasmic portion of the chain corresponds to 259–274; it reads PSLITPMRTKDNVFGK. Residues 275 to 295 form a helical membrane-spanning segment; the sequence is IALVYGVVGVFYFTLSLTGAF. Topologically, residues 296–324 are extracellular; sequence AFEHVQDIYTLNFFHDGNTSFIYSIIDYF. Residue N313 is glycosylated (N-linked (GlcNAc...) asparagine). The chain crosses the membrane as a helical span at residues 325–345; that stretch reads LALFPIITLTSSYPIIALTLI. Residues 346-392 are Cytoplasmic-facing; sequence NNFNVVKDILCPKVGQENESLLEADSLVEDNDTDDEREARNARNEKS. Residues 393–413 form a helical membrane-spanning segment; sequence VFDVLVPALVLALPTFLSLLT. The Extracellular segment spans residues 414–415; the sequence is DD. A helical membrane pass occupies residues 416–436; the sequence is MLLLASITGSFPGVAVQFAIP. Topologically, residues 437-466 are cytoplasmic; sequence CLLVTAARKHARSVLNFPVPRKNNSPFQSP. Residues 467–487 traverse the membrane as a helical segment; sequence IWIVLISSWAGFSMIMVLLNL. Residues 488–492 lie on the Extracellular side of the membrane; that stretch reads VGVKF.

Belongs to the TMEM104 family.

It is found in the membrane. This Caenorhabditis elegans protein is Transmembrane protein 104 homolog.